Reading from the N-terminus, the 500-residue chain is NAD(P)H-quinone oxidoreductase chain 4, chloroplastic (500 aa).

The next 14 helical transmembrane spans lie at F4–L24, Y35–F55, L87–V107, S111–S131, L134–M154, F167–L187, I211–H231, H242–I262, A272–A292, M313–L333, Q334–D354, L386–T406, L417–L437, and L462–V482.

Belongs to the complex I subunit 4 family.

It is found in the plastid. It localises to the chloroplast thylakoid membrane. The catalysed reaction is a plastoquinone + NADH + (n+1) H(+)(in) = a plastoquinol + NAD(+) + n H(+)(out). It catalyses the reaction a plastoquinone + NADPH + (n+1) H(+)(in) = a plastoquinol + NADP(+) + n H(+)(out). This is NAD(P)H-quinone oxidoreductase chain 4, chloroplastic from Saccharum officinarum (Sugarcane).